Reading from the N-terminus, the 240-residue chain is Proline-rich antigen homolog (240 aa).

Composition is skewed to pro residues over residues 1–31 (MTEQ…PAAP) and 38–78 (APPP…PPGP). The disordered stretch occupies residues 1-78 (MTEQPPPGGS…GGYAPPPPGP (78 aa)). Positions 89–233 (TPWITRVLAA…KRQTLADKIM (145 aa)) constitute an RDD domain. The next 3 helical transmembrane spans lie at 98–118 (AFID…IMLV), 142–162 (SMIG…YLVW), and 203–223 (LAHF…LWDA).

Belongs to the mycobacterial Pra family.

The protein resides in the cell membrane. This Mycobacterium tuberculosis (strain CDC 1551 / Oshkosh) protein is Proline-rich antigen homolog.